The primary structure comprises 64 residues: UPF0337 protein SAB0772 (64 aa).

The tract at residues 1–40 is disordered; it reads MADESKFEQAKGNVKETIGNVTDNKNLENEGKEDKASGKA. A compositionally biased stretch (basic and acidic residues) spans 25–40; that stretch reads KNLENEGKEDKASGKA.

The protein belongs to the UPF0337 (CsbD) family.

This is UPF0337 protein SAB0772 from Staphylococcus aureus (strain bovine RF122 / ET3-1).